The following is a 292-amino-acid chain: Cyclin-dependent kinase 5 (292 aa).

The Protein kinase domain occupies 4-286 (YEKLEKIGEG…AEEALQHPYF (283 aa)). ATP contacts are provided by residues 10–18 (IGEGTYGTV) and K33. Position 15 is a phosphotyrosine; by ABL1, EPHA4 and FYN (Y15). Residue T17 is modified to Phosphothreonine. K56 is modified (N6-acetyllysine). A Phosphoserine modification is found at S72. Catalysis depends on D126, which acts as the Proton acceptor. Phosphoserine is present on S159.

This sequence belongs to the protein kinase superfamily. CMGC Ser/Thr protein kinase family. CDC2/CDKX subfamily. As to quaternary structure, heterodimer composed of a catalytic subunit CDK5 and a regulatory subunit CDK5R1 (p25) and macromolecular complex composed of at least CDK5, CDK5R1 (p35) and CDK5RAP1 or CDK5RAP2 or CDK5RAP3. Only the heterodimer shows kinase activity. Under neurotoxic stress and neuronal injury conditions, p35 is cleaved by calpain to generate p25 that hyperactivates CDK5, that becomes functionally disabled and often toxic. Found in a trimolecular complex with CABLES1 and ABL1. Interacts with CABLES1 and CABLES2. Interacts with AATK and GSTP1. Binds to HDAC1 when in complex with p25. Interaction with myristoylation p35 promotes CDK5 association with membranes. Both isoforms 1 and 2 interacts with beta-catenin/CTNNB1. Interacts with delta-catenin/CTNND2 and APEX1. Interacts with P53/TP53 in neurons. Interacts with EPHA4; may mediate the activation of NGEF by EPHA4. Interacts with PTK2/FAK1. The complex p35/CDK5 interacts with CLOCK. Post-translationally, phosphorylation on Tyr-15 by ABL1 and FYN, and on Ser-159 by casein kinase 1 promotes kinase activity. By contrast, phosphorylation at Thr-14 inhibits activity. In terms of processing, phosphorylation at Ser-159 is essential for maximal catalytic activity.

It is found in the nucleus. The protein localises to the cytoplasm. It localises to the cell membrane. The protein resides in the perikaryon. Its subcellular location is the cell projection. It is found in the lamellipodium. The protein localises to the growth cone. It localises to the postsynaptic density. The protein resides in the synapse. The catalysed reaction is L-seryl-[protein] + ATP = O-phospho-L-seryl-[protein] + ADP + H(+). It carries out the reaction L-threonyl-[protein] + ATP = O-phospho-L-threonyl-[protein] + ADP + H(+). With respect to regulation, inhibited by 2-(1-ethyl-2-hydroxyethylamino)-6-benzylamino-9-isopropylpurine (roscovitine), 1-isopropyl-4-aminobenzyl-6-ether-linked benzimidazoles, resveratrol, AT-7519 and olomoucine. Activated by CDK5R1 (p35) and CDK5R2 (p39) during the development of the nervous system; degradation of CDK5R1 (p35) and CDK5R2 (p39) by proteasome result in down regulation of kinase activity, during this process, CDK5 phosphorylates p35 and induces its ubiquitination and subsequent degradation. Kinase activity is mainly determined by the amount of p35 available and subcellular location; reversible association to plasma membrane inhibits activity. Long-term inactivation as well as CDK5R1 (p25)-mediated hyperactivation of CDK5 triggers cell death. The pro-death activity of hyperactivated CDK5 is suppressed by membrane association of CDK5, via myristoylation of p35. Brain-derived neurotrophic factor, glial-derived neurotrophic factor, nerve growth factor (NGF), retinoic acid, laminin and neuregulin promote activity. Neurotoxicity enhances nuclear activity, thus leading to MEF2 phosphorylation and inhibition prior to apoptosis of cortical neurons. Repression by GSTP1 via p25/p35 translocation prevents neurodegeneration. Functionally, proline-directed serine/threonine-protein kinase essential for neuronal cell cycle arrest and differentiation and may be involved in apoptotic cell death in neuronal diseases by triggering abortive cell cycle re-entry. Interacts with D1 and D3-type G1 cyclins. Phosphorylates SRC, NOS3, VIM/vimentin, p35/CDK5R1, MEF2A, SIPA1L1, SH3GLB1, PXN, PAK1, MCAM/MUC18, SEPT5, SYN1, DNM1, AMPH, SYNJ1, CDK16, RAC1, RHOA, CDC42, TONEBP/NFAT5, MAPT/TAU, MAP1B, histone H1, p53/TP53, HDAC1, APEX1, PTK2/FAK1, huntingtin/HTT, ATM, MAP2, NEFH and NEFM. Regulates several neuronal development and physiological processes including neuronal survival, migration and differentiation, axonal and neurite growth, synaptogenesis, oligodendrocyte differentiation, synaptic plasticity and neurotransmission, by phosphorylating key proteins. Negatively regulates the CACNA1B/CAV2.2 -mediated Ca(2+) release probability at hippocampal neuronal soma and synaptic terminals. Activated by interaction with CDK5R1 (p35) and CDK5R2 (p39), especially in postmitotic neurons, and promotes CDK5R1 (p35) expression in an autostimulation loop. Phosphorylates many downstream substrates such as Rho and Ras family small GTPases (e.g. PAK1, RAC1, RHOA, CDC42) or microtubule-binding proteins (e.g. MAPT/TAU, MAP2, MAP1B), and modulates actin dynamics to regulate neurite growth and/or spine morphogenesis. Also phosphorylates exocytosis associated proteins such as MCAM/MUC18, SEPT5, SYN1, and CDK16/PCTAIRE1 as well as endocytosis associated proteins such as DNM1, AMPH and SYNJ1 at synaptic terminals. In the mature central nervous system (CNS), regulates neurotransmitter movements by phosphorylating substrates associated with neurotransmitter release and synapse plasticity; synaptic vesicle exocytosis, vesicles fusion with the presynaptic membrane, and endocytosis. Promotes cell survival by activating anti-apoptotic proteins BCL2 and STAT3, and negatively regulating of JNK3/MAPK10 activity. Phosphorylation of p53/TP53 in response to genotoxic and oxidative stresses enhances its stabilization by preventing ubiquitin ligase-mediated proteasomal degradation, and induces transactivation of p53/TP53 target genes, thus regulating apoptosis. Phosphorylation of p35/CDK5R1 enhances its stabilization by preventing calpain-mediated proteolysis producing p25/CDK5R1 and avoiding ubiquitin ligase-mediated proteasomal degradation. During aberrant cell-cycle activity and DNA damage, p25/CDK5 activity elicits cell-cycle activity and double-strand DNA breaks that precedes neuronal death by deregulating HDAC1. DNA damage triggered phosphorylation of huntingtin/HTT in nuclei of neurons protects neurons against polyglutamine expansion as well as DNA damage mediated toxicity. Phosphorylation of PXN reduces its interaction with PTK2/FAK1 in matrix-cell focal adhesions (MCFA) during oligodendrocytes (OLs) differentiation. Negative regulator of Wnt/beta-catenin signaling pathway. Activator of the GAIT (IFN-gamma-activated inhibitor of translation) pathway, which suppresses expression of a post-transcriptional regulon of proinflammatory genes in myeloid cells; phosphorylates the linker domain of glutamyl-prolyl tRNA synthetase (EPRS) in a IFN-gamma-dependent manner, the initial event in assembly of the GAIT complex. Phosphorylation of SH3GLB1 is required for autophagy induction in starved neurons. Phosphorylation of TONEBP/NFAT5 in response to osmotic stress mediates its rapid nuclear localization. MEF2 is inactivated by phosphorylation in nucleus in response to neurotoxin, thus leading to neuronal apoptosis. APEX1 AP-endodeoxyribonuclease is repressed by phosphorylation, resulting in accumulation of DNA damage and contributing to neuronal death. NOS3 phosphorylation down regulates NOS3-derived nitrite (NO) levels. SRC phosphorylation mediates its ubiquitin-dependent degradation and thus leads to cytoskeletal reorganization. May regulate endothelial cell migration and angiogenesis via the modulation of lamellipodia formation. Involved in dendritic spine morphogenesis by mediating the EFNA1-EPHA4 signaling. The complex p35/CDK5 participates in the regulation of the circadian clock by modulating the function of CLOCK protein: phosphorylates CLOCK at 'Thr-451' and 'Thr-461' and regulates the transcriptional activity of the CLOCK-BMAL1 heterodimer in association with altered stability and subcellular distribution. This Bos taurus (Bovine) protein is Cyclin-dependent kinase 5.